We begin with the raw amino-acid sequence, 348 residues long: UPF0283 membrane protein HAPS_0079 (348 aa).

Transmembrane regions (helical) follow at residues 57 to 77 (FLAALALFGIATIAQSVQWLI), 86 to 106 (IYFAFAVAFFGISLAGVGAII), and 203 to 223 (ENAIIVAVSPLALVDILMVAW).

Belongs to the UPF0283 family.

The protein resides in the cell inner membrane. The sequence is that of UPF0283 membrane protein HAPS_0079 from Glaesserella parasuis serovar 5 (strain SH0165) (Haemophilus parasuis).